The chain runs to 4118 residues: BEACH domain-containing protein lvsB (4118 aa).

Positions 1-35 (MNRNFNNINNNNNNNNNYHGYQYHQQQQQQNQQQQ) are disordered. The chain crosses the membrane as a helical span at residues 198 to 218 (GIPLSFLNFLITILLRILSLP). Residues 236–257 (NFSGNNNNNFNNNNHYFNNNHN) are compositionally biased toward low complexity. 3 disordered regions span residues 236-267 (NFSG…QHHQ), 332-382 (PLSS…SKNN), and 621-644 (ISSS…KNNN). The segment covering 258 to 267 (NHNHHYQHHQ) has biased composition (basic residues). Composition is skewed to low complexity over residues 332 to 381 (PLSS…NSKN) and 621 to 636 (ISSS…NSDG). The helical transmembrane segment at 827 to 847 (YLVLYMIVTEILSLLLELLVP) threads the bilayer. The span at 1155-1170 (NGGSISPSSIINNMNS) shows a compositional bias: low complexity. Disordered regions lie at residues 1155 to 1213 (NGGS…FNNN), 1599 to 1622 (ANTT…TAVS), 1643 to 1681 (NSGI…STNL), 1928 to 1968 (GNFL…ISSS), 2015 to 2044 (STNN…SNSL), 2537 to 2574 (RRGS…NNNE), 2702 to 2741 (FSPS…TSDS), 2754 to 2791 (DQSN…NGIN), 2902 to 3007 (NTNS…NSNE), 3245 to 3265 (PLIP…TKDQ), and 3348 to 3418 (KTTA…NIVK). Composition is skewed to low complexity over residues 1657–1678 (SIGS…SGSS) and 1935–1968 (SSSN…ISSS). The span at 2540–2571 (SSSSSTNSTTNNNNNNSSTTTTSNNNNNNNEN) shows a compositional bias: low complexity. Residues 2705-2738 (SRSKEKEKEKEKEKEKEKEKEKERERERETTNVT) adopt a coiled-coil conformation. The span at 2706-2734 (RSKEKEKEKEKEKEKEKEKEKERERERET) shows a compositional bias: basic and acidic residues. Composition is skewed to low complexity over residues 2758-2791 (EESS…NGIN) and 2902-2947 (NTNS…NSTN). The span at 2948–2962 (QTITDTTLSPASSNV) shows a compositional bias: polar residues. 2 stretches are compositionally biased toward low complexity: residues 2963-2980 (SISN…NNNS) and 2988-3006 (SNIN…SNSN). Residues 3303-3479 (KLGEKVNEVF…DRDIVYDLIM (177 aa)) form the BEACH-type PH domain. Residues 3357–3411 (SNNNNNNNNNNNNNNNNNNNNSNDTTSSINSTTATNTNTTNTTTTNTTTTTTTTN) show a composition bias toward low complexity. The 292-residue stretch at 3491 to 3782 (AEVHGNILKM…QIFTKPHPKK (292 aa)) folds into the BEACH domain. 5 WD repeats span residues 3868 to 3907 (VLND…GTIM), 3924 to 3963 (GHTN…YINS), 3984 to 4027 (TFET…LAKQ), 4029 to 4073 (FVND…KIRT), and 4075 to 4114 (VSKS…GYSS).

Its subcellular location is the membrane. It is found in the lysosome. The protein resides in the endosome. In terms of biological role, involved in negative regulation of lysosome biogenesis, by limiting the heterotypic fusion of early endosomes and postlysosomal compartments. This Dictyostelium discoideum (Social amoeba) protein is BEACH domain-containing protein lvsB (lvsB).